Here is a 131-residue protein sequence, read N- to C-terminus: Sirohydrochlorin cobaltochelatase (131 aa).

Histidine 12 serves as the catalytic Proton acceptor. Residues histidine 12 and histidine 78 each contribute to the Co(2+) site. Residues histidine 12 and histidine 78 each contribute to the Ni(2+) site. 73–78 provides a ligand contact to substrate; the sequence is LASGVH.

It belongs to the CbiX family. CbiXS subfamily. In terms of assembly, homotetramer; dimer of dimers.

It catalyses the reaction Co-sirohydrochlorin + 2 H(+) = sirohydrochlorin + Co(2+). It carries out the reaction Ni-sirohydrochlorin + 2 H(+) = sirohydrochlorin + Ni(2+). The protein operates within cofactor biosynthesis; adenosylcobalamin biosynthesis; cob(II)yrinate a,c-diamide from sirohydrochlorin (anaerobic route): step 1/10. In terms of biological role, catalyzes the insertion of Co(2+) into sirohydrochlorin as part of the anaerobic pathway to cobalamin biosynthesis. Involved in the biosynthesis of the unique nickel-containing tetrapyrrole coenzyme F430, the prosthetic group of methyl-coenzyme M reductase (MCR), which plays a key role in methanogenesis and anaerobic methane oxidation. Catalyzes the insertion of Ni(2+) into sirohydrochlorin to yield Ni-sirohydrochlorin. The protein is Sirohydrochlorin cobaltochelatase of Methanococcoides burtonii (strain DSM 6242 / NBRC 107633 / OCM 468 / ACE-M).